A 355-amino-acid polypeptide reads, in one-letter code: MNPIRKIIHIDMDCFYAAIEMRDFPELANKPIAVGGDAKHRGVIATCNYAARQFGIRSAMPTAHALKLCRELILRPVRMDVYQKESQYIRSLLTEYTDLIEPLSLDEAYLDVTESTQCQGSATWIAEEIRARIYQTRQLTASAGIAPNKSLAKIASDWHKPNGQMVIRPEDVSAFVLDLPVRKLFGVGPKMEEKLGALNIKTCADLQRYSIEYLLQKFGTMGQRLYELARGIDNRPVNPERIRKSISVEETYPKDLPNSEACLAVLPDLMARLEARIQRAGKISGIHNLFVKLKFNDFQQTTIERVMDKIDLIVLRQLIQEGFARRGMPVRLLGIGIKLKQENTYQSVQLPLLDL.

Residues 7 to 188 (IIHIDMDCFY…LPVRKLFGVG (182 aa)) form the UmuC domain. 2 residues coordinate Mg(2+): aspartate 11 and aspartate 106. Glutamate 107 is a catalytic residue.

The protein belongs to the DNA polymerase type-Y family. As to quaternary structure, monomer. It depends on Mg(2+) as a cofactor.

Its subcellular location is the cytoplasm. It carries out the reaction DNA(n) + a 2'-deoxyribonucleoside 5'-triphosphate = DNA(n+1) + diphosphate. Poorly processive, error-prone DNA polymerase involved in untargeted mutagenesis. Copies undamaged DNA at stalled replication forks, which arise in vivo from mismatched or misaligned primer ends. These misaligned primers can be extended by PolIV. Exhibits no 3'-5' exonuclease (proofreading) activity. May be involved in translesional synthesis, in conjunction with the beta clamp from PolIII. The chain is DNA polymerase IV from Legionella pneumophila (strain Lens).